The following is a 78-amino-acid chain: MATRSVLLALVVLNLLFYVPPGRSGPNVYIQKIFASCWRLQGTCRPKCLKNETISYFGVILYICGCVNPKYLPILTGK.

The signal sequence occupies residues 1–24 (MATRSVLLALVVLNLLFYVPPGRS). 2 cysteine pairs are disulfide-bonded: C37-C64 and C48-C66.

The protein belongs to the beta-defensin family.

It localises to the secreted. In terms of biological role, has antibacterial activity. The sequence is that of Beta-defensin 135 (DEFB135) from Pan troglodytes (Chimpanzee).